The chain runs to 1356 residues: Tenascin-R (1356 aa).

A signal peptide spans 1–31 (MGIEGETVVLKNMLIGVNLILLGSMLKPSEC). Residue N55 is glycosylated (N-linked (GlcNAc...) asparagine). Residues 127 to 157 (CASSAQVLQELLSRIEMLEREVSVLRDQCNT) adopt a coiled-coil conformation. O-linked (Xyl...) (chondroitin sulfate) serine glycosylation occurs at S176. Residues N180 and N198 are each glycosylated (N-linked (GlcNAc...) asparagine). EGF-like domains follow at residues 188-199 (CICNEGWFGKNC), 204-230 (CPLGCSSRGVCVDGQCICDSEYSGDDC), and 235-261 (CPTDCSSRGLCVDGECVCEEPYTGEDC). The O-linked (Xyl...) (chondroitin sulfate) serine glycan is linked to S271. A glycan (N-linked (GlcNAc...) asparagine) is linked at N278. EGF-like domains are found at residues 281–292 (CLCQEGYAGEDC) and 293–324 (SQRRCLNACSGRGHCQEGLCICEEGYQGPDCS). Cystine bridges form between C297–C307 and C314–C323. S302 is a glycosylation site (O-linked (Xyl...) (chondroitin sulfate) serine). Fibronectin type-III domains lie at 328–419 (PPED…TPQG), 420–504 (LQFK…TVID), 505–596 (GPTQ…IDAP), 597–686 (KNLR…TELD), 687–776 (SPRD…FRPI), 777–864 (SHLH…TGID), 865–953 (PPKN…AMDS), 954–1040 (PMDL…TLLD), and 1041–1129 (PPAN…GGRV). N-linked (GlcNAc...) asparagine glycans are attached at residues N391, N469, and N580. The residue at position 723 (S723) is a Phosphoserine. Residues N790, N868, N873, N1034, N1044, and N1259 are each glycosylated (N-linked (GlcNAc...) asparagine). Residues 1127-1342 (GRVFSHPQDC…FVEMKMRPYI (216 aa)) form the Fibrinogen C-terminal domain.

The protein belongs to the tenascin family. As to quaternary structure, forms oligomers. Interacts with TNC and FN1. Interacts with BCAN and ACAN in a calcium -dependent manner. Interacts with CNTN1, SCN2B, PTPRZ1, and CSPG3. Post-translationally, contains N-linked oligosaccharides, O-linked sialylated structures. Contains O-linked chondroitin sulfate glycosaminoglycans. Contains N-linked oligosaccharides with a sulfated carbohydrate structure type GalNAc-4-SO4 or HNK-1 (SO4-3-GlcUABeta1,3GalBeta1,4GlcNAc). The levels of HNK-1 rise and fall in parallel to those of TNR during postnatal development of the cerebellum. In contrast, levels of GalNAc-4-SO4 are regulated independently from those of TNR, rising late in cerebellar development and continuing into adulthood. Early in postnatal development, GalNAc-4-SO4 is found predominantly on isoform 1, whereas in the adult it is predominantly on isoform 2. In terms of tissue distribution, brain-specific. Expressed in oligodendrocytes and small subsets of neurons (mainly interneurons and motoneurons) of the cerebellum, hippocampus and olfactory bulb. Expressed in dorsal root ganglia.

The protein localises to the secreted. It localises to the extracellular space. Its subcellular location is the extracellular matrix. Its function is as follows. Neural extracellular matrix (ECM) protein involved in interactions with different cells and matrix components. Theses interactions can influence cellular behavior by either evoking a stable adhesion and differentiation, or repulsion and inhibition of neurite growth. Binding to cell surface gangliosides inhibits RGD-dependent integrin-mediated cell adhesion and results in an inhibition of PTK2/FAK1 (FAK) phosphorylation and cell detachment. Binding to membrane surface sulfatides results in a oligodendrocyte adhesion and differentiation. Interaction with CNTN1 induces a repulsion of neurons and an inhibition of neurite outgrowth. Interacts with SCN2B may play a crucial role in clustering and regulation of activity of sodium channels at nodes of Ranvier. TNR-linked chondroitin sulfate glycosaminoglycans are involved in the interaction with FN1 and mediates inhibition of cell adhesion and neurite outgrowth. The highly regulated addition of sulfated carbohydrate structure may modulate the adhesive properties of TNR over the course of development and during synapse maintenance. The sequence is that of Tenascin-R (Tnr) from Rattus norvegicus (Rat).